Consider the following 446-residue polypeptide: Exodeoxyribonuclease 7 large subunit (446 aa).

Belongs to the XseA family. As to quaternary structure, heterooligomer composed of large and small subunits.

It is found in the cytoplasm. The catalysed reaction is Exonucleolytic cleavage in either 5'- to 3'- or 3'- to 5'-direction to yield nucleoside 5'-phosphates.. Functionally, bidirectionally degrades single-stranded DNA into large acid-insoluble oligonucleotides, which are then degraded further into small acid-soluble oligonucleotides. The polypeptide is Exodeoxyribonuclease 7 large subunit (Ligilactobacillus salivarius (strain UCC118) (Lactobacillus salivarius)).